The primary structure comprises 1184 residues: Fibulin-2 (1184 aa).

A signal peptide spans 1-27 (MVLLWEPAGAWLALGLALALGPSVAAA). A subdomain NA (Cys-rich) region spans residues 28–177 (APRQDCTGVE…ELICYQLPGC (150 aa)). The tract at residues 28–444 (APRQDCTGVE…EGSTKDLIET (417 aa)) is n. The interval 178 to 444 (HGNFSDAEEG…EGSTKDLIET (267 aa)) is subdomain NB (Cys-free). N-linked (GlcNAc...) asparagine glycosylation is present at Asn-180. Disordered stretches follow at residues 221 to 293 (VQAG…MAVT) and 399 to 437 (IPPT…PEGS). The span at 224-236 (GAGGPPAALGGGS) shows a compositional bias: gly residues. The segment covering 252-261 (PRPTAAAALG) has biased composition (low complexity). A compositionally biased stretch (acidic residues) spans 276–288 (DSEEEEEEEEERE). A Phosphoserine modification is found at Ser-277. The segment covering 423-436 (PNSVHSIPRSSPEG) has biased composition (polar residues). Intrachain disulfides connect Cys-445/Cys-472, Cys-446/Cys-479, Cys-459/Cys-480, Cys-489/Cys-518, Cys-502/Cys-519, Cys-521/Cys-545, Cys-522/Cys-552, Cys-535/Cys-553, Cys-608/Cys-620, Cys-616/Cys-629, Cys-631/Cys-644, Cys-683/Cys-693, Cys-689/Cys-702, Cys-704/Cys-717, Cys-723/Cys-736, Cys-730/Cys-745, Cys-751/Cys-762, Cys-768/Cys-781, Cys-775/Cys-790, Cys-796/Cys-808, Cys-814/Cys-827, Cys-821/Cys-836, Cys-843/Cys-856, Cys-862/Cys-875, Cys-869/Cys-884, Cys-886/Cys-899, Cys-905/Cys-917, Cys-913/Cys-926, Cys-928/Cys-941, Cys-947/Cys-956, Cys-952/Cys-965, Cys-967/Cys-980, Cys-986/Cys-998, Cys-994/Cys-1007, Cys-1009/Cys-1023, Cys-1029/Cys-1042, Cys-1036/Cys-1051, and Cys-1056/Cys-1068. 3 consecutive Anaphylatoxin-like domains span residues 445-480 (CCAA…RHCC), 488-519 (SCMA…KQCC), and 521-553 (CCGL…LSCC). Asn-507 is a glycosylation site (N-linked (GlcNAc...) asparagine). One can recognise an EGF-like 1; calcium-binding domain in the interval 604–645 (DQDECLLLPGELCQHLCINTVGSYHCACFPGFSLQDDGRTCR). The EGF-like 2 domain occupies 679–718 (QPNTCKDNGPCKQVCSTVGGSAICSCFPGYAIMADGVSCE). Positions 719 to 763 (DINECVTDLHTCSRGEHCVNTLGSFHCYKALTCEPGYALKDGECE) constitute an EGF-like 3; calcium-binding domain. In terms of domain architecture, EGF-like 4; calcium-binding spans 764-809 (DVDECAMGTHTCQPGFLCQNTKGSFYCQARQRCMDGFLQDPEGNCV). Positions 810-857 (DINECTSLSEPCRPGFSCINTVGSYTCQRNPLICARGYHASDDGTKCV) constitute an EGF-like 5; calcium-binding domain. The EGF-like 6; calcium-binding domain maps to 858–900 (DVNECETGVHRCGEGQVCHNLPGSYRCDCKAGFQRDAFGRGCI). Residues 901-942 (DVNECWASPGRLCQHTCENTLGSYRCSCASGFLLAADGKRCE) enclose the EGF-like 7; calcium-binding domain. In terms of domain architecture, EGF-like 8; calcium-binding spans 943–981 (DVNECEAQRCSQECANIYGSYQCYCRQGYQLAEDGHTCT). In terms of domain architecture, EGF-like 9; calcium-binding spans 982–1024 (DIDECAQGAGILCTFRCLNVPGSYQCACPEQGYTMTANGRSCK). The EGF-like 10; calcium-binding domain maps to 1025 to 1069 (DVDECALGTHNCSEAETCHNIQGSFRCLRFECPPNYVQVSKTKCE). A glycan (N-linked (GlcNAc...) asparagine) is linked at Asn-1035. The segment at 1070–1184 (RTTCHDFLEC…MHIFFTTFAL (115 aa)) is domain III.

This sequence belongs to the fibulin family. As to quaternary structure, homotrimer; disulfide-linked. Interacts with LAMA2. Interacts with FBN1 (via N-terminal domain). Forms a ternary complex with ELN and FBN1. O-glycosylated with core 1 or possibly core 8 glycans. It is unsure if the O-glycosylation is on Thr-347 or Ser-348. As to expression, component of both basement membranes and other connective tissues. Expressed in heart, placenta and ovary.

The protein localises to the secreted. Its subcellular location is the extracellular space. The protein resides in the extracellular matrix. Its function is as follows. Its binding to fibronectin and some other ligands is calcium dependent. May act as an adapter that mediates the interaction between FBN1 and ELN. The polypeptide is Fibulin-2 (FBLN2) (Homo sapiens (Human)).